Reading from the N-terminus, the 435-residue chain is GTPase Der (435 aa).

EngA-type G domains follow at residues 8–169 and 176–351; these read NLVA…NFEN and FKIA…NNLS. Residues 14-21, 61-65, 123-126, 182-189, 229-233, and 294-297 contribute to the GTP site; these read GKPNVGKS, DTGGI, NKLD, GKPNAGKS, DTAGI, and NKWD. The region spanning 352–435 is the KH-like domain; the sequence is REIKQNLLND…PINLVLKKNK (84 aa).

The protein belongs to the TRAFAC class TrmE-Era-EngA-EngB-Septin-like GTPase superfamily. EngA (Der) GTPase family. As to quaternary structure, associates with the 50S ribosomal subunit.

Its function is as follows. GTPase that plays an essential role in the late steps of ribosome biogenesis. The protein is GTPase Der of Mycoplasmopsis pulmonis (strain UAB CTIP) (Mycoplasma pulmonis).